A 341-amino-acid polypeptide reads, in one-letter code: S-adenosylmethionine:tRNA ribosyltransferase-isomerase (341 aa).

Belongs to the QueA family. As to quaternary structure, monomer.

The protein localises to the cytoplasm. It catalyses the reaction 7-aminomethyl-7-carbaguanosine(34) in tRNA + S-adenosyl-L-methionine = epoxyqueuosine(34) in tRNA + adenine + L-methionine + 2 H(+). Its pathway is tRNA modification; tRNA-queuosine biosynthesis. In terms of biological role, transfers and isomerizes the ribose moiety from AdoMet to the 7-aminomethyl group of 7-deazaguanine (preQ1-tRNA) to give epoxyqueuosine (oQ-tRNA). This chain is S-adenosylmethionine:tRNA ribosyltransferase-isomerase, found in Herminiimonas arsenicoxydans.